We begin with the raw amino-acid sequence, 211 residues long: Thiamine-phosphate synthase (211 aa).

4-amino-2-methyl-5-(diphosphooxymethyl)pyrimidine-binding positions include 37-41 (QLREK) and Asn69. Positions 70 and 89 each coordinate Mg(2+). Ser108 is a 4-amino-2-methyl-5-(diphosphooxymethyl)pyrimidine binding site. 134 to 136 (TTT) serves as a coordination point for 2-[(2R,5Z)-2-carboxy-4-methylthiazol-5(2H)-ylidene]ethyl phosphate. Lys137 contacts 4-amino-2-methyl-5-(diphosphooxymethyl)pyrimidine. 2-[(2R,5Z)-2-carboxy-4-methylthiazol-5(2H)-ylidene]ethyl phosphate contacts are provided by residues Gly163 and 183 to 184 (VS).

It belongs to the thiamine-phosphate synthase family. Mg(2+) is required as a cofactor.

The catalysed reaction is 2-[(2R,5Z)-2-carboxy-4-methylthiazol-5(2H)-ylidene]ethyl phosphate + 4-amino-2-methyl-5-(diphosphooxymethyl)pyrimidine + 2 H(+) = thiamine phosphate + CO2 + diphosphate. The enzyme catalyses 2-(2-carboxy-4-methylthiazol-5-yl)ethyl phosphate + 4-amino-2-methyl-5-(diphosphooxymethyl)pyrimidine + 2 H(+) = thiamine phosphate + CO2 + diphosphate. It catalyses the reaction 4-methyl-5-(2-phosphooxyethyl)-thiazole + 4-amino-2-methyl-5-(diphosphooxymethyl)pyrimidine + H(+) = thiamine phosphate + diphosphate. It participates in cofactor biosynthesis; thiamine diphosphate biosynthesis; thiamine phosphate from 4-amino-2-methyl-5-diphosphomethylpyrimidine and 4-methyl-5-(2-phosphoethyl)-thiazole: step 1/1. Functionally, condenses 4-methyl-5-(beta-hydroxyethyl)thiazole monophosphate (THZ-P) and 2-methyl-4-amino-5-hydroxymethyl pyrimidine pyrophosphate (HMP-PP) to form thiamine monophosphate (TMP). In Enterococcus faecalis (strain ATCC 700802 / V583), this protein is Thiamine-phosphate synthase.